Consider the following 287-residue polypeptide: Survival motor neuron protein (287 aa).

The tract at residues 1 to 27 (MGGGGGLPEPEDSVLFRRGTGQSDDSD) is disordered. The segment at 8 to 39 (PEPEDSVLFRRGTGQSDDSDIWDDTALIKAYD) is P1 (binding site for GEMIN2). A Phosphothreonine modification is found at Thr20. Phosphoserine is present on residues Ser23 and Ser26. Residue Lys46 forms a Glycyl lysine isopeptide (Lys-Gly) (interchain with G-Cter in SUMO2) linkage. Residues 52–83 (GDISEASDKPKSTPKRKPAKKNKSQKKNATTA) are disordered. The span at 63–77 (STPKRKPAKKNKSQK) shows a compositional bias: basic residues. Thr64 is subject to Phosphothreonine. One can recognise a Tudor domain in the interval 86 to 146 (QWKVGDKCSA…LSPACEVANN (61 aa)). Residues 92–205 (KCSAVWSEDG…MSGSGLGPGK (114 aa)) form a required for interaction with RPP20/POP7 region. A disordered region spans residues 148 to 216 (EQDTQENENE…GVKFSGPPPP (69 aa)). Residues 157-180 (ESQISTDESENSSRSPGNKPNNIK) are compositionally biased toward polar residues. A Glycyl lysine isopeptide (Lys-Gly) (interchain with G-Cter in SUMO2) cross-link involves residue Lys205. Positions 234-261 (PPIIPPPPPICPDSLDDADALGSMLISW) are P2 (binding site for SM B). The tract at residues 273–287 (GFKQNQKEGRCSHFN) is required for interaction with SYNCRIP.

The protein belongs to the SMN family. Homooligomer; may form higher order homooligomers in the dimer to octamer range. Part of the core SMN complex that contains SMN1, GEMIN2/SIP1, DDX20/GEMIN3, GEMIN4, GEMIN5, GEMIN6, GEMIN7, GEMIN8 and STRAP/UNRIP. Part of the SMN-Sm complex that contains SMN1, GEMIN2/SIP1, DDX20/GEMIN3, GEMIN4, GEMIN5, GEMIN6, GEMIN7, GEMIN8, STRAP/UNRIP and the Sm proteins SNRPB, SNRPD1, SNRPD2, SNRPD3, SNRPE, SNRPF and SNRPG. Component of an import snRNP complex composed of KPNB1, RNUT1, SMN1 and ZNF259. Interacts with DDX20, FBL, NOLA1, RNUT1, SYNCRIP and with several spliceosomal snRNP core Sm proteins, including SNRPB, SNRPD1, SNRPD2, SNRPD3, SNRPE and ILF3. Interacts with GEMIN2; the interaction is direct. Interacts with GEMIN3; the interaction is direct. Interacts with GEMIN8; the interaction is direct. Interacts with SNRPB; the interaction is direct. Interacts (via Tudor domain) with SNRPD1 (via C-terminus); the interaction is direct. Interacts with SNRPD2; the interaction is direct. Interacts (via Tudor domain) with SNRPD3 (via C-terminus); the interaction is direct. Interacts with SNRPE; the interaction is direct. Interacts with OSTF1, LSM10, LSM11 and RPP20/POP7. Interacts (via C-terminal region) with ZPR1 (via C-terminal region). Interacts (via Tudor domain) with COIL. Interacts with SETX; recruits SETX to POLR2A. Interacts with POLR2A (via the C-terminal domain (CTD)). Interacts with PRMT5. Interacts with XRN2. Interacts (via C-terminus) with FMR1 (via C-terminus); the interaction is direct and occurs in a RNA-independent manner. Interacts (via Tudor domain) with SF3B2 ('Arg-508'-methylated form). Interacts with WRAP53/TCAB1. Interacts (via Tudor domain) with ELAVL4 in an RNA-independent manner; the interaction is required for localization of ELAVL4 to RNA granules. Interacts with FRG1.

The protein resides in the nucleus. It localises to the gem. The protein localises to the cajal body. It is found in the cytoplasm. Its subcellular location is the cytoplasmic granule. The protein resides in the perikaryon. It localises to the cell projection. The protein localises to the neuron projection. It is found in the axon. Its subcellular location is the myofibril. The protein resides in the sarcomere. It localises to the z line. Its function is as follows. The SMN complex catalyzes the assembly of small nuclear ribonucleoproteins (snRNPs), the building blocks of the spliceosome, and thereby plays an important role in the splicing of cellular pre-mRNAs. Most spliceosomal snRNPs contain a common set of Sm proteins SNRPB, SNRPD1, SNRPD2, SNRPD3, SNRPE, SNRPF and SNRPG that assemble in a heptameric protein ring on the Sm site of the small nuclear RNA to form the core snRNP (Sm core). In the cytosol, the Sm proteins SNRPD1, SNRPD2, SNRPE, SNRPF and SNRPG are trapped in an inactive 6S pICln-Sm complex by the chaperone CLNS1A that controls the assembly of the core snRNP. To assemble core snRNPs, the SMN complex accepts the trapped 5Sm proteins from CLNS1A forming an intermediate. Binding of snRNA inside 5Sm ultimately triggers eviction of the SMN complex, thereby allowing binding of SNRPD3 and SNRPB to complete assembly of the core snRNP. Within the SMN complex, SMN1 acts as a structural backbone and together with GEMIN2 it gathers the Sm complex subunits. Ensures the correct splicing of U12 intron-containing genes that may be important for normal motor and proprioceptive neurons development. Also required for resolving RNA-DNA hybrids created by RNA polymerase II, that form R-loop in transcription terminal regions, an important step in proper transcription termination. May also play a role in the metabolism of small nucleolar ribonucleoprotein (snoRNPs). This is Survival motor neuron protein (SMN1) from Canis lupus familiaris (Dog).